The sequence spans 87 residues: U14-lycotoxin-Ls1a (87 aa).

An N-terminal signal peptide occupies residues 1–20 (MNSKVFAVLLLLALSTCVLS). The region spanning 21–66 (EKYCPTPRNTSCKKMNIRNNCCRDSDCTSNAFCCAEPCGNFCHKAS) is the WAP domain. 5 disulfide bridges follow: Cys-24–Cys-54, Cys-32–Cys-58, Cys-41–Cys-53, Cys-42–Cys-80, and Cys-47–Cys-62.

It belongs to the venom protein 11 family. 01 (wap-1) subfamily. In terms of processing, contains 5 disulfide bonds. As to expression, expressed by the venom gland.

The protein resides in the secreted. Its function is as follows. Has antibacterial activity. The polypeptide is U14-lycotoxin-Ls1a (Lycosa singoriensis (Wolf spider)).